Consider the following 354-residue polypeptide: Replication factor C subunit 5 (354 aa).

40–47 serves as a coordination point for ATP; it reads YGPSGSGK.

The protein belongs to the activator 1 small subunits family. As to quaternary structure, heterotetramer of subunits RFC2, RFC3, RFC4 and RFC5 that can form a complex with RFC1. Expressed in roots, leaves, shoot apical meristem (SAM), flag leaves and panicles.

The protein resides in the nucleus. In terms of biological role, may be involved in DNA replication and thus regulate cell proliferation. This Oryza sativa subsp. japonica (Rice) protein is Replication factor C subunit 5 (RFC5).